The primary structure comprises 276 residues: Elongation factor Ts (276 aa).

Residues 76 to 79 (TDFV) form an involved in Mg(2+) ion dislocation from EF-Tu region.

The protein belongs to the EF-Ts family.

It localises to the cytoplasm. Functionally, associates with the EF-Tu.GDP complex and induces the exchange of GDP to GTP. It remains bound to the aminoacyl-tRNA.EF-Tu.GTP complex up to the GTP hydrolysis stage on the ribosome. The sequence is that of Elongation factor Ts from Mycobacterium leprae (strain Br4923).